The sequence spans 469 residues: Cholesterol 7-desaturase nvd (469 aa).

An N-terminal signal peptide occupies residues 1–25 (MASFCASKFLPGLLMLGLGLAVALA). The chain crosses the membrane as a helical span at residues 58 to 78 (NFVASQTLLTLTIFGVASFIL). The Rieske domain occupies 132-238 (IPLVASQDLV…VIEQNGFVLV (107 aa)). Residues Cys172, His174, Cys192, and His195 each contribute to the [2Fe-2S] cluster site.

Belongs to the cholesterol 7-desaturase family. [2Fe-2S] cluster is required as a cofactor.

The protein resides in the membrane. It carries out the reaction cholesterol + NADPH + O2 + H(+) = 7-dehydrocholesterol + NADP(+) + 2 H2O. It catalyses the reaction cholesterol + NADH + O2 + H(+) = 7-dehydrocholesterol + NAD(+) + 2 H2O. The protein operates within steroid hormone biosynthesis; dafachronic acid biosynthesis. Catalyzes the production of 7-dehydrocholesterol (7-DHC or cholesta-5,7-dien-3beta-ol) by inserting a double bond (desaturating) at the C7-C8 single bond of cholesterol. Essential regulator of steroid biosynthesis as this reaction is the first step in the synthesis of the steroid hormone Delta(7)-dafachronic acid. The polypeptide is Cholesterol 7-desaturase nvd (Hemicentrotus pulcherrimus (Sea urchin)).